The sequence spans 237 residues: Phosphoribosylaminoimidazole-succinocarboxamide synthase (237 aa).

The protein belongs to the SAICAR synthetase family.

The enzyme catalyses 5-amino-1-(5-phospho-D-ribosyl)imidazole-4-carboxylate + L-aspartate + ATP = (2S)-2-[5-amino-1-(5-phospho-beta-D-ribosyl)imidazole-4-carboxamido]succinate + ADP + phosphate + 2 H(+). It participates in purine metabolism; IMP biosynthesis via de novo pathway; 5-amino-1-(5-phospho-D-ribosyl)imidazole-4-carboxamide from 5-amino-1-(5-phospho-D-ribosyl)imidazole-4-carboxylate: step 1/2. The chain is Phosphoribosylaminoimidazole-succinocarboxamide synthase from Cronobacter sakazakii (strain ATCC BAA-894) (Enterobacter sakazakii).